Reading from the N-terminus, the 257-residue chain is Zinc import ATP-binding protein ZnuC (257 aa).

Residues 5–220 (ITLKNVAVNF…PEFIAMFGHH (216 aa)) form the ABC transporter domain. 37 to 44 (GPNGAGKS) is an ATP binding site.

This sequence belongs to the ABC transporter superfamily. Zinc importer (TC 3.A.1.15.5) family. The complex is composed of two ATP-binding proteins (ZnuC), two transmembrane proteins (ZnuB) and a solute-binding protein (ZnuA).

The protein localises to the cell inner membrane. It catalyses the reaction Zn(2+)(out) + ATP(in) + H2O(in) = Zn(2+)(in) + ADP(in) + phosphate(in) + H(+)(in). Part of the ABC transporter complex ZnuABC involved in zinc import. Responsible for energy coupling to the transport system. The protein is Zinc import ATP-binding protein ZnuC of Photorhabdus laumondii subsp. laumondii (strain DSM 15139 / CIP 105565 / TT01) (Photorhabdus luminescens subsp. laumondii).